Here is a 122-residue protein sequence, read N- to C-terminus: Large ribosomal subunit protein uL14 (122 aa).

Belongs to the universal ribosomal protein uL14 family. As to quaternary structure, part of the 50S ribosomal subunit. Forms a cluster with proteins L3 and L19. In the 70S ribosome, L14 and L19 interact and together make contacts with the 16S rRNA in bridges B5 and B8.

In terms of biological role, binds to 23S rRNA. Forms part of two intersubunit bridges in the 70S ribosome. The polypeptide is Large ribosomal subunit protein uL14 (Cellvibrio japonicus (strain Ueda107) (Pseudomonas fluorescens subsp. cellulosa)).